A 321-amino-acid chain; its full sequence is GDP-L-fucose synthase (321 aa).

14 to 20 (GGSGLVG) contributes to the NADP(+) binding site. Y143 (proton donor/acceptor) is an active-site residue. Residues K147, 170-173 (PTNV), and H186 each bind NADP(+). The substrate site is built by K194, W208, R215, and D277.

The protein belongs to the NAD(P)-dependent epimerase/dehydratase family. Fucose synthase subfamily. In terms of assembly, homodimer.

The catalysed reaction is GDP-beta-L-fucose + NADP(+) = GDP-4-dehydro-alpha-D-rhamnose + NADPH + H(+). It functions in the pathway nucleotide-sugar biosynthesis; GDP-L-fucose biosynthesis via de novo pathway; GDP-L-fucose from GDP-alpha-D-mannose: step 2/2. In terms of biological role, catalyzes the two-step NADP-dependent conversion of GDP-4-dehydro-6-deoxy-D-mannose to GDP-fucose, involving an epimerase and a reductase reaction. This chain is GDP-L-fucose synthase (GFUS), found in Pongo abelii (Sumatran orangutan).